The sequence spans 545 residues: Threonine--tRNA ligase catalytic subunit (545 aa).

The interval 139–433 is catalytic; the sequence is DHRLIGEKLD…LLEHFKGKLP (295 aa). Zn(2+) contacts are provided by Cys231, His282, and His410.

The protein belongs to the class-II aminoacyl-tRNA synthetase family. As to quaternary structure, homodimer. Probably interacts with its editing subunit. Zn(2+) is required as a cofactor.

Its subcellular location is the cytoplasm. It carries out the reaction tRNA(Thr) + L-threonine + ATP = L-threonyl-tRNA(Thr) + AMP + diphosphate + H(+). In terms of biological role, catalyzes the attachment of threonine to tRNA(Thr) in a two-step reaction: L-threonine is first activated by ATP to form Thr-AMP and then transferred to the acceptor end of tRNA(Thr). Also activates L-serine and transfers it to tRNA(Thr) but cannot deacylate incorrectly charged amino acid; unlike most archaea the editing function is found in a freestanding protein. This Saccharolobus islandicus (strain Y.G.57.14 / Yellowstone #1) (Sulfolobus islandicus) protein is Threonine--tRNA ligase catalytic subunit.